Reading from the N-terminus, the 814-residue chain is Threonine--tRNA ligase 2, cytoplasmic (814 aa).

Positions 2-72 (AAHIAQRLTV…SLREEQERAR (71 aa)) form a coiled coil. The interval 62 to 142 (RSLREEQERA…GHKQEGPCAP (81 aa)) is disordered. 3 stretches are compositionally biased toward basic and acidic residues: residues 63–72 (SLREEQERAR), 88–102 (EEPK…EKGQ), and 119–137 (GNKK…HKQE). A TGS domain is found at 172-234 (KPIKITLADG…EQDSNVELLK (63 aa)). The short motif at 798 to 804 (KLKTLKK) is the Nuclear localization signal element.

It belongs to the class-II aminoacyl-tRNA synthetase family.

Its subcellular location is the cytoplasm. The protein resides in the nucleus. It carries out the reaction tRNA(Thr) + L-threonine + ATP = L-threonyl-tRNA(Thr) + AMP + diphosphate + H(+). In terms of biological role, catalyzes the attachment of threonine to tRNA(Thr) in a two-step reaction: threonine is first activated by ATP to form Thr-AMP and then transferred to the acceptor end of tRNA(Thr). Also edits incorrectly charged tRNA(Thr) via its editing domain, at the post-transfer stage. The sequence is that of Threonine--tRNA ligase 2, cytoplasmic (tars3) from Xenopus tropicalis (Western clawed frog).